The sequence spans 320 residues: Probable carboxylesterase M8 (320 aa).

Positions His-52–Gly-54 match the Involved in the stabilization of the negatively charged intermediate by the formation of the oxyanion hole motif. Residues Ser-137 and His-296 contribute to the active site.

Belongs to the 'GDXG' lipolytic enzyme family.

It carries out the reaction a carboxylic ester + H2O = an alcohol + a carboxylate + H(+). It participates in secondary metabolite biosynthesis. Probable carboxylesterase; part of the gene cluster that mediates the biosynthesis of squalestatin S1 (SQS1, also known as zaragozic acid A), a heavily oxidized fungal polyketide that offers potent cholesterol lowering activity by targeting squalene synthase (SS). SQS1 is composed of a 2,8-dioxobicyclic[3.2.1]octane-3,4,5-tricarboxyclic acid core that is connected to two lipophilic polyketide arms. These initial steps feature the priming of an unusual benzoic acid starter unit onto the highly reducing polyketide synthase pks2, followed by oxaloacetate extension and product release to generate a tricarboxylic acid containing product. The phenylalanine ammonia lyase (PAL) M7 and the acyl-CoA ligase M9 are involved in transforming phenylalanine into benzoyl-CoA. The citrate synthase-like protein R3 is involved in connecting the C-alpha-carbons of the hexaketide chain and oxaloacetate to afford the tricarboxylic acid unit. The potential hydrolytic enzymes, M8 and M10, are in close proximity to pks2 and may participate in product release. On the other side, the tetraketide arm is synthesized by a the squalestatin tetraketide synthase pks1 and enzymatically esterified to the core in the last biosynthetic step, by the acetyltransferase M4. The biosynthesis of the tetraketide must involve 3 rounds of chain extension. After the first and second rounds methyl-transfer occurs, and in all rounds of extension the ketoreductase and dehydratase are active. The enoyl reductase and C-MeT of pks1 are not active in the final round of extension. The acetyltransferase M4 appears to have a broad substrate selectivity for its acyl CoA substrate, allowing the in vitro synthesis of novel squalestatins. The biosynthesis of SQS1 requires several oxidative steps likely performed by oxidoreductases M1, R1 and R2. Finally, in support of the identification of the cluster as being responsible for SQS1 production, the cluster contains a gene encoding a putative squalene synthase (SS) R6, suggesting a likely mechanism for self-resistance. The protein is Probable carboxylesterase M8 of Phoma sp. (strain ATCC 20986 / MF5453).